We begin with the raw amino-acid sequence, 72 residues long: UPF0352 protein NTHI1007 (72 aa).

It belongs to the UPF0352 family.

The sequence is that of UPF0352 protein NTHI1007 from Haemophilus influenzae (strain 86-028NP).